Consider the following 1343-residue polypeptide: Spermatogenesis-associated protein 31A6 (1343 aa).

A helical membrane pass occupies residues 23–43 (PWVLDIFLTLVFALGFFFLLL). Disordered regions lie at residues 55–88 (PSPSPGKRKCPVGRRRRPRGRMKNHSLRAGRECP), 106–235 (GPHL…STLI), 624–654 (DESPGTSQAKGKPSPWQSSTSTGESSKEAQK), 895–951 (PRGI…REAV), 1080–1156 (VQEE…PPSV), and 1309–1331 (KAVSPVSPPQHWPKTSGASSHHH). Over residues 60 to 82 (GKRKCPVGRRRRPRGRMKNHSLR) the composition is skewed to basic residues. Over residues 165-178 (LASTPSPGPMTTSV) the composition is skewed to polar residues. Positions 198 to 222 (PEPPALFPHPPHTPDPLACSPPPPK) are enriched in pro residues. Composition is skewed to polar residues over residues 627-647 (PGTSQAKGKPSPWQSSTSTGE) and 923-944 (LTYSLTGSTQQSRSLGAQSSKA). 2 stretches are compositionally biased toward basic and acidic residues: residues 1104–1123 (HKSEKSRKPNLEKHEERLEG) and 1133–1142 (RKTEDTHQDE).

This sequence belongs to the SPATA31 family.

The protein resides in the membrane. Its function is as follows. May play a role in spermatogenesis. The polypeptide is Spermatogenesis-associated protein 31A6 (SPATA31A6) (Homo sapiens (Human)).